Here is a 1183-residue protein sequence, read N- to C-terminus: DNA-directed RNA polymerase subunit beta (1183 aa).

Positions 1153–1162 are enriched in acidic residues; that stretch reads DMQDNEEEDV. Positions 1153-1183 are disordered; it reads DMQDNEEEDVVERKVDLQQKDAPQSQKEVTD. A compositionally biased stretch (polar residues) spans 1173 to 1183; it reads DAPQSQKEVTD.

Belongs to the RNA polymerase beta chain family. As to quaternary structure, the RNAP catalytic core consists of 2 alpha, 1 beta, 1 beta' and 1 omega subunit. When a sigma factor is associated with the core the holoenzyme is formed, which can initiate transcription.

The catalysed reaction is RNA(n) + a ribonucleoside 5'-triphosphate = RNA(n+1) + diphosphate. In terms of biological role, DNA-dependent RNA polymerase catalyzes the transcription of DNA into RNA using the four ribonucleoside triphosphates as substrates. The polypeptide is DNA-directed RNA polymerase subunit beta (Staphylococcus saprophyticus subsp. saprophyticus (strain ATCC 15305 / DSM 20229 / NCIMB 8711 / NCTC 7292 / S-41)).